Consider the following 593-residue polypeptide: Aspartate--tRNA ligase (593 aa).

Glu-180 is a binding site for L-aspartate. Residues 204–207 form an aspartate region; that stretch reads QIFK. Arg-226 is a binding site for L-aspartate. Residues 226-228 and Gln-235 each bind ATP; that span reads RDE. His-453 serves as a coordination point for L-aspartate. Residue Glu-487 coordinates ATP. Arg-494 provides a ligand contact to L-aspartate. An ATP-binding site is contributed by 539–542; that stretch reads GLDR.

This sequence belongs to the class-II aminoacyl-tRNA synthetase family. Type 1 subfamily. In terms of assembly, homodimer.

The protein resides in the cytoplasm. It catalyses the reaction tRNA(Asp) + L-aspartate + ATP = L-aspartyl-tRNA(Asp) + AMP + diphosphate. Catalyzes the attachment of L-aspartate to tRNA(Asp) in a two-step reaction: L-aspartate is first activated by ATP to form Asp-AMP and then transferred to the acceptor end of tRNA(Asp). This is Aspartate--tRNA ligase from Clostridium botulinum (strain 657 / Type Ba4).